Reading from the N-terminus, the 298-residue chain is Probable 3-mercaptopyruvate sulfurtransferase (298 aa).

One can recognise a Rhodanese 1 domain in the interval 24 to 141 (NAQKTVLLDA…WKTEGLELET (118 aa)). Residues 142-175 (GEPRTPKPVVYEGAKLNKDLVASFDDIVKVIESP) are hinge. At Ser164 the chain carries Phosphoserine. A Rhodanese 2 domain is found at 176 to 292 (DAAGVHIVDA…YGKRANEDSS (117 aa)). Arg190 contributes to the substrate binding site. Cys252 (cysteine persulfide intermediate) is an active-site residue.

It localises to the mitochondrion. It catalyses the reaction 2-oxo-3-sulfanylpropanoate + [thioredoxin]-dithiol = [thioredoxin]-disulfide + hydrogen sulfide + pyruvate + H(+). Required for formation of the 2-thio group of the 5-methoxycarbonylmethyl-2-thiouridine modified base in some tRNAs. This Schizosaccharomyces pombe (strain 972 / ATCC 24843) (Fission yeast) protein is Probable 3-mercaptopyruvate sulfurtransferase (tum1).